A 977-amino-acid chain; its full sequence is Monofunctional C1-tetrahydrofolate synthase, mitochondrial (977 aa).

The transit peptide at 1–31 (MSVRLPLLLRQLGRQQLPSGPACRLRELCRS) directs the protein to the mitochondrion. Residues 29-71 (CRSGSRSSSSGGGDPEGLRGRRLQDGQTFSSHGPGNPEAPGMD) form a disordered region. Residues 32–347 (GSRSSSSGGG…REQQHRRWRL (316 aa)) are methylenetetrahydrofolate dehydrogenase and cyclohydrolase. The residue at position 188 (K188) is an N6-acetyllysine; alternate. At K188 the chain carries N6-succinyllysine; alternate. Residues 348–977 (HCLKLQPLSP…TETEQVKGLF (630 aa)) form a formyltetrahydrofolate synthetase region. S356 is modified (phosphoserine). 422–429 (TPLGEGKS) contacts ATP. K595 bears the N6-succinyllysine mark.

This sequence in the N-terminal section; belongs to the tetrahydrofolate dehydrogenase/cyclohydrolase family. It in the C-terminal section; belongs to the formate--tetrahydrofolate ligase family. Homodimer.

The protein resides in the mitochondrion. It catalyses the reaction (6S)-5,6,7,8-tetrahydrofolate + formate + ATP = (6R)-10-formyltetrahydrofolate + ADP + phosphate. Its pathway is one-carbon metabolism; tetrahydrofolate interconversion. May provide the missing metabolic reaction required to link the mitochondria and the cytoplasm in the mammalian model of one-carbon folate metabolism complementing thus the enzymatic activities of MTHFD2. The chain is Monofunctional C1-tetrahydrofolate synthase, mitochondrial (Mthfd1l) from Mus musculus (Mouse).